The primary structure comprises 876 residues: Alanine--tRNA ligase (876 aa).

Zn(2+)-binding residues include histidine 565, histidine 569, cysteine 667, and histidine 671.

It belongs to the class-II aminoacyl-tRNA synthetase family. The cofactor is Zn(2+).

It localises to the cytoplasm. It carries out the reaction tRNA(Ala) + L-alanine + ATP = L-alanyl-tRNA(Ala) + AMP + diphosphate. In terms of biological role, catalyzes the attachment of alanine to tRNA(Ala) in a two-step reaction: alanine is first activated by ATP to form Ala-AMP and then transferred to the acceptor end of tRNA(Ala). Also edits incorrectly charged Ser-tRNA(Ala) and Gly-tRNA(Ala) via its editing domain. This chain is Alanine--tRNA ligase, found in Staphylococcus aureus (strain USA300).